The following is a 608-amino-acid chain: Putative pentatricopeptide repeat-containing protein At1g16830 (608 aa).

PPR repeat units follow at residues 107–141 (KPRVFLLLLEIFWRGHIYDKAIEVYTGMSSFGFVP), 142–172 (NTRAMNMMMDVNFKLNVVNGALEIFEGIRFR), 173–210 (NFFSFDIALSHFCSRGGRGDLVGVKIVLKRMIGEGFYP), 211–245 (NRERFGQILRLCCRTGCVSEAFQVVGLMICSGISV), 246–280 (SVNVWSMLVSGFFRSGEPQKAVDLFNKMIQIGCSP), 281–315 (NLVTYTSLIKGFVDLGMVDEAFTVLSKVQSEGLAP), 316–350 (DIVLCNLMIHTYTRLGRFEEARKVFTSLEKRKLVP), 351–381 (DQYTFASILSSLCLSGKFDLVPRITHGIGTD), 383–417 (DLVTGNLLSNCFSKIGYNSYALKVLSIMSYKDFAL), 418–452 (DCYTYTVYLSALCRGGAPRAAIKMYKIIIKEKKHL), 453–487 (DAHFHSAIIDSLIELGKYNTAVHLFKRCILEKYPL), 488–522 (DVVSYTVAIKGLVRAKRIEEAYSLCCDMKEGGIYP), and 523–557 (NRRTYRTIISGLCKEKETEKVRKILRECIQEGVEL).

The protein belongs to the PPR family. P subfamily.

The protein is Putative pentatricopeptide repeat-containing protein At1g16830 of Arabidopsis thaliana (Mouse-ear cress).